Consider the following 471-residue polypeptide: Alpha-galactosidase 2 (471 aa).

A signal peptide spans 1–18; that stretch reads MFAFYFLTACISLKGVFG. A disulfide bridge links cysteine 42 with cysteine 74. 2 residues coordinate substrate: aspartate 72 and aspartate 73. Asparagine 105 is a glycosylation site (N-linked (GlcNAc...) asparagine). Cysteine 121 and cysteine 151 are disulfide-bonded. Lysine 147 is a substrate binding site. Aspartate 149 functions as the Nucleophile in the catalytic mechanism. Asparagine 175 is a glycosylation site (N-linked (GlcNAc...) asparagine). A substrate-binding site is contributed by arginine 205. Aspartate 209 acts as the Proton donor in catalysis. Intrachain disulfides connect cysteine 221/cysteine 237 and cysteine 223/cysteine 230. Residue glutamine 251 participates in substrate binding. 7 N-linked (GlcNAc...) asparagine glycosylation sites follow: asparagine 270, asparagine 370, asparagine 403, asparagine 413, asparagine 422, asparagine 435, and asparagine 454.

This sequence belongs to the glycosyl hydrolase 27 family. Homotetramer.

The protein localises to the secreted. The catalysed reaction is Hydrolysis of terminal, non-reducing alpha-D-galactose residues in alpha-D-galactosides, including galactose oligosaccharides, galactomannans and galactolipids.. The chain is Alpha-galactosidase 2 (MEL2) from Saccharomyces cerevisiae (Baker's yeast).